The following is a 349-amino-acid chain: Anthranilate phosphoribosyltransferase (349 aa).

Residues Gly81, 84-85 (GD), Thr89, 91-94 (NVST), 109-117 (KHGNRAASS), and Ala121 each bind 5-phospho-alpha-D-ribose 1-diphosphate. Gly81 contributes to the anthranilate binding site. A Mg(2+)-binding site is contributed by Ser93. Asn112 serves as a coordination point for anthranilate. Arg167 is a binding site for anthranilate. Residues Asp226 and Glu227 each coordinate Mg(2+).

This sequence belongs to the anthranilate phosphoribosyltransferase family. As to quaternary structure, homodimer. It depends on Mg(2+) as a cofactor.

It catalyses the reaction N-(5-phospho-beta-D-ribosyl)anthranilate + diphosphate = 5-phospho-alpha-D-ribose 1-diphosphate + anthranilate. It participates in amino-acid biosynthesis; L-tryptophan biosynthesis; L-tryptophan from chorismate: step 2/5. In terms of biological role, catalyzes the transfer of the phosphoribosyl group of 5-phosphorylribose-1-pyrophosphate (PRPP) to anthranilate to yield N-(5'-phosphoribosyl)-anthranilate (PRA). The protein is Anthranilate phosphoribosyltransferase of Methylocella silvestris (strain DSM 15510 / CIP 108128 / LMG 27833 / NCIMB 13906 / BL2).